The following is a 177-amino-acid chain: Large ribosomal subunit protein uL6 (177 aa).

Belongs to the universal ribosomal protein uL6 family. As to quaternary structure, part of the 50S ribosomal subunit.

In terms of biological role, this protein binds to the 23S rRNA, and is important in its secondary structure. It is located near the subunit interface in the base of the L7/L12 stalk, and near the tRNA binding site of the peptidyltransferase center. The chain is Large ribosomal subunit protein uL6 from Paramagnetospirillum magneticum (strain ATCC 700264 / AMB-1) (Magnetospirillum magneticum).